Consider the following 32-residue polypeptide: Parigidin-br1 (32 aa).

The cyclopeptide (Gly-Asp) cross-link spans 1–32 (GGSVPCGESCVFIPCITSLAGCSCKNKVCYYD). 3 disulfide bridges follow: cysteine 6–cysteine 22, cysteine 10–cysteine 24, and cysteine 15–cysteine 29.

In terms of processing, this is a cyclic peptide. Expressed in leaves, flowers, peduncles and seeds (at protein level).

Probably participates in a plant defense mechanism. Reduces growth of and increases mortality in larvae of D.saccharalis. Kills cultured SF-9 cells of S.frugiperda probably by disrupting plasma membranes. Has hemolytic activity against human erythrocytes. Has no antibacterial activity against E.coli strain ATCC 8739 and S.aureus strain ATCC 25923. This Palicourea rigida protein is Parigidin-br1.